A 578-amino-acid polypeptide reads, in one-letter code: Adhesion G protein-coupled receptor A1 (578 aa).

Residues 1-22 (MTQWDLKTVLSLPQYPGEFLHP) are Extracellular-facing. Residues 23–43 (VVYACTAVMLLCLLASVITYI) form a helical membrane-spanning segment. Topologically, residues 44–56 (LHQSAIRISRKGR) are cytoplasmic. A helical membrane pass occupies residues 57–77 (HALLNFCFHAALTFTVFAGGI). Over 78–87 (NRTQHPILCQ) the chain is Extracellular. A helical membrane pass occupies residues 88-108 (AVGIALHYSTLSTMLWIGVTA). Residues 109 to 137 (RNIYKQVTKKALPCPGADQPPYPKQPLLR) lie on the Cytoplasmic side of the membrane. Residues 138-158 (FYLISGGVPFIICGVTAATNI) traverse the membrane as a helical segment. Topologically, residues 159 to 178 (RNYGTEDEDVAYCWMAWEPS) are extracellular. Residues 179–199 (LGAFYGPAAFIALVTCVYFLC) form a helical membrane-spanning segment. The Cytoplasmic portion of the chain corresponds to 200 to 262 (TYVQLRRHPE…NEHSFKAQLR (63 aa)). The interval 216–236 (ERTEEQQRLAVPESGHRHGVR) is disordered. A helical membrane pass occupies residues 263–283 (AAAFTLFLFTATWTFGALAVS). Topologically, residues 284-289 (QGHFLD) are extracellular. Residues 290–310 (MIFSCLYGAFCVTLGLFVLIH) form a helical membrane-spanning segment. Disordered regions lie at residues 463–486 (PSSL…EGPM) and 537–578 (SLPF…ETTV). The segment covering 469–481 (SPHSSRSESPTSS) has biased composition (low complexity). Residues 537–548 (SLPFGGPSQNGL) are compositionally biased toward polar residues.

This sequence belongs to the G-protein coupled receptor 2 family. Adhesion G-protein coupled receptor (ADGR) subfamily. Predominantly expressed in CNS.

Its subcellular location is the membrane. The chain is Adhesion G protein-coupled receptor A1 from Mus musculus (Mouse).